The chain runs to 468 residues: Replication factor C large subunit (468 aa).

50–57 (GPPGSGKT) is an ATP binding site. A disordered region spans residues 422 to 456 (EEKAVEEKVEEEEAEEEEEEERKEEEKPKAEKKKG). Over residues 429-444 (KVEEEEAEEEEEEERK) the composition is skewed to acidic residues.

The protein belongs to the activator 1 small subunits family. RfcL subfamily. In terms of assembly, heteromultimer composed of small subunits (RfcS) and large subunits (RfcL).

In terms of biological role, part of the RFC clamp loader complex which loads the PCNA sliding clamp onto DNA. The sequence is that of Replication factor C large subunit from Pyrococcus horikoshii (strain ATCC 700860 / DSM 12428 / JCM 9974 / NBRC 100139 / OT-3).